The chain runs to 96 residues: Co-chaperonin GroES (96 aa).

This sequence belongs to the GroES chaperonin family. In terms of assembly, heptamer of 7 subunits arranged in a ring. Interacts with the chaperonin GroEL.

It localises to the cytoplasm. Together with the chaperonin GroEL, plays an essential role in assisting protein folding. The GroEL-GroES system forms a nano-cage that allows encapsulation of the non-native substrate proteins and provides a physical environment optimized to promote and accelerate protein folding. GroES binds to the apical surface of the GroEL ring, thereby capping the opening of the GroEL channel. This Wolbachia sp. subsp. Drosophila simulans (strain wRi) protein is Co-chaperonin GroES.